The primary structure comprises 918 residues: Bromodomain testis-specific protein (918 aa).

The segment at 1–26 is disordered; it reads MSDVKPPQHFTMNGNPPPPEFKNPKK. Residues 29–135 form the Bromo 1 domain; that stretch reads RLTNHLQYIE…KLFLEKVAEM (107 aa). The short motif at 204 to 215 is the Nuclear localization signal element; it reads NGVKRKADTTTP. Disordered regions lie at residues 241 to 267, 379 to 430, 575 to 712, 738 to 764, and 862 to 899; these read RGSG…GRRT, EPKN…RAHR, KNKP…SLVS, IPPL…SSSQ, and DTPK…AMSG. The 110-residue stretch at 267 to 376 folds into the Bromo 2 domain; it reads TKLSERLKYC…DVFEFRFSKI (110 aa). The segment covering 399-416 has biased composition (low complexity); it reads SPSSSESSDSESSSPENS. Positions 426–452 form a coiled coil; sequence ERAHRLASLEEQQLKAVREQLQLLTQT. One can recognise an NET domain in the interval 496–578; it reads DSEEEMNTLP…GCLRKKKNKP (83 aa). A compositionally biased stretch (basic residues) spans 575 to 584; the sequence is KNKPPKKSKI. The segment covering 605 to 617 has biased composition (basic and acidic residues); the sequence is KIETDGEIKDTTH. Low complexity-rich tracts occupy residues 622–648 and 739–764; these read SDSS…DSDS and PPLL…SSSQ. Positions 815–902 form a coiled coil; that stretch reads EKELTTASRG…RREAMSGVID (88 aa). Residues 877-896 show a composition bias toward basic and acidic residues; that stretch reads VDREREMARKREQERRRREA.

The protein belongs to the BET family.

The protein localises to the nucleus. In terms of biological role, testis-specific chromatin protein that specifically binds histone H4 acetylated at 'Lys-5' and 'Lys-8' (H4K5ac and H4K8ac, respectively) and plays a key role in spermatogenesis. Required in late pachytene spermatocytes: plays a role in meiotic and post-meiotic cells by binding to acetylated histones at the promoter of specific meiotic and post-meiotic genes, facilitating their activation at the appropriate time. In the post-meiotic phase of spermatogenesis, binds to hyperacetylated histones and participates in their general removal from DNA. Also recognizes and binds a subset of butyrylated histones: able to bind histone H4 butyrylated at 'Lys-8' (H4K8ac), while it is not able to bind H4 butyrylated at 'Lys-5' (H4K5ac). This chain is Bromodomain testis-specific protein (brdt), found in Danio rerio (Zebrafish).